The chain runs to 943 residues: UvrABC system protein A (943 aa).

31–38 (GLSGSGKS) contacts ATP. A C4-type zinc finger spans residues 253-280 (CPHCGYSVPELEPRLFSFNNPAGACPTC). ABC transporter domains follow at residues 310 to 587 (WDRR…PNSI) and 607 to 937 (LDKK…RFLK). 640–647 (GVSGSGKS) contacts ATP. The C4-type zinc finger occupies 740–766 (CEACQGDGVLKVEMHFLPDVYVPCDQC).

The protein belongs to the ABC transporter superfamily. UvrA family. Forms a heterotetramer with UvrB during the search for lesions.

It is found in the cytoplasm. The UvrABC repair system catalyzes the recognition and processing of DNA lesions. UvrA is an ATPase and a DNA-binding protein. A damage recognition complex composed of 2 UvrA and 2 UvrB subunits scans DNA for abnormalities. When the presence of a lesion has been verified by UvrB, the UvrA molecules dissociate. In Haemophilus influenzae (strain ATCC 51907 / DSM 11121 / KW20 / Rd), this protein is UvrABC system protein A.